The chain runs to 742 residues: Serine/threonine-protein kinase SKY1 (742 aa).

A disordered region spans residues 13 to 146 (KSAHLADTST…KDYRPGGYHP (134 aa)). The segment covering 19–35 (DTSTDASISCEEATSSQ) has biased composition (polar residues). The segment covering 56 to 73 (TKSKLSLALQTSKSSSSA) has biased composition (low complexity). Basic and acidic residues predominate over residues 81–101 (TSSKTEDFSTKSIKKKPDSGV). The segment covering 106-127 (SIQSDSGPQSDSDLDSDSSISS) has biased composition (low complexity). A compositionally biased stretch (basic and acidic residues) spans 128 to 140 (CDERNEESLKDYR). The Protein kinase domain maps to 158–706 (YILVRKLGWG…AGGLVNHPWL (549 aa)). ATP-binding positions include 164–172 (LGWGHFSTV) and K187. The Proton acceptor role is filled by D294. T383 and T386 each carry phosphothreonine. 8 positions are modified to phosphoserine: S388, S393, S410, S427, S432, S445, S449, and S453. The disordered stretch occupies residues 459–491 (INEDSNDNNNNDNSKNKNNNNNNSNNNNNEDIM). Residues 465–489 (DNNNNDNSKNKNNNNNNSNNNNNED) show a composition bias toward low complexity.

The protein belongs to the protein kinase superfamily. Ser/Thr protein kinase family.

It carries out the reaction L-seryl-[protein] + ATP = O-phospho-L-seryl-[protein] + ADP + H(+). It catalyses the reaction L-threonyl-[protein] + ATP = O-phospho-L-threonyl-[protein] + ADP + H(+). Functionally, constitutively active kinase, specifically and sequentially phosphorylates serine/arginine (SR)-type shuttling mRNA binding proteins in their RS dipeptide repeats. The chain is Serine/threonine-protein kinase SKY1 (SKY1) from Saccharomyces cerevisiae (strain ATCC 204508 / S288c) (Baker's yeast).